The sequence spans 280 residues: Transcription factor MYB60 (280 aa).

HTH myb-type domains follow at residues 9-65 and 66-116; these read KIGI…RPGI and KRGN…KKKL. 2 consecutive DNA-binding regions (H-T-H motif) follow at residues 37-61 and 89-112; these read WRSV…TNYL and WASI…NTHL. S-nitrosocysteine occurs at positions 49 and 53. Over residues 118–127 the composition is skewed to basic and acidic residues; the sequence is KSDSDERSRS. 2 disordered regions span residues 118-149 and 204-247; these read KSDS…TYAS and EEGH…NATP. The span at 128-149 shows a compositional bias: polar residues; the sequence is ENIALQTSSTRNTINHRSTYAS.

As to expression, specifically expressed in guard cells. Present in seedlings, leaves, stems and flowers.

The protein resides in the nucleus. In terms of biological role, transcription factor involved in the regulation of gene (e.g. drought-regulated and flavonoid biosynthetic genes) expression and stomatal movements leading to negative regulation of responses to drought and responses to other physiological stimuli (e.g. light). Promotes guard cell deflation in response to water deficit. Triggers root growth upon osmotic stress (e.g. mannitol containing medium). The sequence is that of Transcription factor MYB60 from Arabidopsis thaliana (Mouse-ear cress).